The following is a 347-amino-acid chain: Glycerol-1-phosphate dehydrogenase [NAD(P)+] (347 aa).

Residues 94–98 (GKVID) and 116–119 (TAAS) contribute to the NAD(+) site. Substrate is bound at residue Asp-121. Position 125 (Ser-125) interacts with NAD(+). Substrate is bound at residue Asp-168. Zn(2+)-binding residues include Asp-168 and His-248. Residue His-252 participates in substrate binding. His-264 contributes to the Zn(2+) binding site.

This sequence belongs to the glycerol-1-phosphate dehydrogenase family. As to quaternary structure, homooctamer. It depends on Zn(2+) as a cofactor.

It localises to the cytoplasm. The enzyme catalyses sn-glycerol 1-phosphate + NAD(+) = dihydroxyacetone phosphate + NADH + H(+). It catalyses the reaction sn-glycerol 1-phosphate + NADP(+) = dihydroxyacetone phosphate + NADPH + H(+). It functions in the pathway membrane lipid metabolism; glycerophospholipid metabolism. With respect to regulation, partially inhibited by divalent metal cations such as Co(2+), Cu(2+) and Ni(2+). Functionally, catalyzes the NAD(P)H-dependent reduction of dihydroxyacetonephosphate (DHAP or glycerone phosphate) to glycerol 1-phosphate (G1P). The G1P thus generated is used as the glycerophosphate backbone of phospholipids in the cellular membranes of Archaea. Is also able to catalyze the reverse reaction, i.e. the NAD(P)(+)-dependent oxidation of G1P but not of G3P. Is not active toward glycerol, dihydroxyacetone, glyceraldehyde-3-phosphate, glyceraldehyde and glycerol-2-phosphate. The sequence is that of Glycerol-1-phosphate dehydrogenase [NAD(P)+] (egsA) from Methanothermobacter thermautotrophicus (strain ATCC 29096 / DSM 1053 / JCM 10044 / NBRC 100330 / Delta H) (Methanobacterium thermoautotrophicum).